We begin with the raw amino-acid sequence, 145 residues long: Large ribosomal subunit protein uL13 (145 aa).

The protein belongs to the universal ribosomal protein uL13 family. Part of the 50S ribosomal subunit. Interacts weakly with proteins L3 and L6.

This protein is one of the early assembly proteins of the 50S ribosomal subunit. Binds to 23S rRNA. This chain is Large ribosomal subunit protein uL13, found in Haloarcula marismortui (strain ATCC 43049 / DSM 3752 / JCM 8966 / VKM B-1809) (Halobacterium marismortui).